A 91-amino-acid chain; its full sequence is MSITTERKQKLIKEYAITENDTGSSAVQCAILTERINNLTEHFKSNHKDHTSRRGLLILVGRRRRLLNYIKKNNVSKYLDLISKLGIRKIK.

This sequence belongs to the universal ribosomal protein uS15 family. In terms of assembly, part of the 30S ribosomal subunit. Forms a bridge to the 50S subunit in the 70S ribosome, contacting the 23S rRNA.

One of the primary rRNA binding proteins, it binds directly to 16S rRNA where it helps nucleate assembly of the platform of the 30S subunit by binding and bridging several RNA helices of the 16S rRNA. In terms of biological role, forms an intersubunit bridge (bridge B4) with the 23S rRNA of the 50S subunit in the ribosome. This is Small ribosomal subunit protein uS15 from Rickettsia peacockii (strain Rustic).